We begin with the raw amino-acid sequence, 171 residues long: PBAN-type neuropeptides (171 aa).

Positions 1 to 22 (MFRLYFFFNVICIFLAIRSAIG) are cleaved as a signal peptide. Residues 23–47 (GEVPDATEQKINNFLASGKDSEDLS) constitute a propeptide that is removed on maturation. Leucine amide is present on Leu59. Residues 63 to 111 (TIASELHDEMMDEIDDNPLYYSGESPQRVASEIAQGTPYVVLLLTGRVL) constitute a propeptide that is removed on maturation. The segment at 120 to 151 (HSTTPRLGRRDASSSNENNSRPPFAPRLGRNL) is disordered. Leucine amide is present on residues Leu126, Leu147, and Leu157. A propeptide spanning residues 160 to 171 (SFGAPVVDNFAY) is cleaved from the precursor.

It belongs to the pyrokinin family.

It localises to the secreted. Functionally, a hormone that controls sex pheromone production in females and pheromone responsiveness in male. Also mediates visceral muscle contractile activity (myotropic activity). The chain is PBAN-type neuropeptides from Aedes aegypti (Yellowfever mosquito).